A 204-amino-acid polypeptide reads, in one-letter code: ATP phosphoribosyltransferase (204 aa).

Belongs to the ATP phosphoribosyltransferase family. Short subfamily. In terms of assembly, heteromultimer composed of HisG and HisZ subunits.

The protein resides in the cytoplasm. The catalysed reaction is 1-(5-phospho-beta-D-ribosyl)-ATP + diphosphate = 5-phospho-alpha-D-ribose 1-diphosphate + ATP. It participates in amino-acid biosynthesis; L-histidine biosynthesis; L-histidine from 5-phospho-alpha-D-ribose 1-diphosphate: step 1/9. Catalyzes the condensation of ATP and 5-phosphoribose 1-diphosphate to form N'-(5'-phosphoribosyl)-ATP (PR-ATP). Has a crucial role in the pathway because the rate of histidine biosynthesis seems to be controlled primarily by regulation of HisG enzymatic activity. This is ATP phosphoribosyltransferase from Staphylococcus aureus (strain Mu3 / ATCC 700698).